Reading from the N-terminus, the 529-residue chain is Delayed-rectifier potassium channel regulatory subunit KCNS1 (529 aa).

Residues 1–217 (MLMLLVRGTR…LTMENPGYSL (217 aa)) lie on the Cytoplasmic side of the membrane. The chain crosses the membrane as a helical span at residues 218 to 239 (PSKLFSCVSISVVLASIAAMCI). Topologically, residues 240–270 (HSLPEYQAREAAAAVAAVAAGRSAEGVRDDP) are extracellular. Residues 271 to 293 (VLRRLEYFCIAWFSFEVSSRLLL) traverse the membrane as a helical segment. Residues 294 to 304 (APSTRNFFCHP) lie on the Cytoplasmic side of the membrane. The chain crosses the membrane as a helical span at residues 305–322 (LNLIDIVSVLPFYLTLLA). At 323–340 (GAALGDHGGTGGKEFGHL) the chain is on the extracellular side. A helical; Voltage-sensor membrane pass occupies residues 341 to 361 (GKVVQVFRLMRIFRVLKLARH). At 362 to 376 (STGLRSLGATLKHSY) the chain is on the cytoplasmic side. Residues 377–398 (REVGILLLYLAVGVSVFSGVAY) form a helical membrane-spanning segment. Over 399–411 (TAEKEEHVGFDTI) the chain is Extracellular. Residues 412–423 (PACWWWGTVSMT) constitute an intramembrane region (helical). Positions 424–429 (TVGYGD) match the Selectivity filter motif. An intramembrane segment occupies 424–431 (TVGYGDVV). The Extracellular portion of the chain corresponds to 432–438 (PVTVAGK). The helical transmembrane segment at 439-467 (LAASGCILGGILVVALPITIIFNKFSHFY) threads the bilayer. The Cytoplasmic segment spans residues 468–529 (RRQKALEAAV…PSEPPHSQMY (62 aa)). A disordered region spans residues 494 to 529 (GVSEASLETSRETSQEGRSADLETQVPSEPPHSQMY). Basic and acidic residues predominate over residues 502-514 (TSRETSQEGRSAD).

The protein belongs to the potassium channel family. S (TC 1.A.1.2) subfamily. Kv9.1/KCNS1 sub-subfamily. In terms of assembly, heterotetramer with KCNB1. Heterotetramer with KCNB2. Does not form homomultimers.

It localises to the cell membrane. Its function is as follows. Potassium channel regulatory subunit that modulate the delayed rectifier voltage-gated potassium channel activity of KCNB1 and KCNB2 by altering their kinetics, expression levels, and shifting the half-inactivation potential to more polarized values. While it does not form functional channels on its own, it can form functional heterotetrameric channels with KCNB1 and KCNB2. Each regulatory subunit has unique regulatory properties that can lead to extensive inhibition, significant changes in kinetics, and/or substantial shifts in the voltage dependencies of the inactivation process. This Aotus nancymaae (Ma's night monkey) protein is Delayed-rectifier potassium channel regulatory subunit KCNS1.